We begin with the raw amino-acid sequence, 724 residues long: Pediocin PA-1 transport/processing ATP-binding protein PedD (724 aa).

Residues 13-140 form the Peptidase C39 domain; the sequence is QVDENDCGLA…KEWTQIAIII (128 aa). Cys-19 is a catalytic residue. The next 6 helical transmembrane spans lie at 170–190, 207–227, 284–304, 307–327, 396–416, and 426–446; these read IGLI…GAYF, LSLV…INYI, TTLT…FLAY, INLF…VWLF, IKAA…TFFV, and LLTY…IINL. The ABC transmembrane type-1 domain maps to 170–452; the sequence is IGLIITAAAI…IINLQPKLQA (283 aa). Positions 486 to 722 constitute an ABC transporter domain; sequence IEVNHVSFNY…NGYYARLIHN (237 aa). Residue 519–526 coordinates ATP; the sequence is GMSGSGKT.

This sequence belongs to the ABC transporter superfamily. Pediocin PA-1 exporter (TC 3.A.1.112.2) family.

The protein resides in the cell membrane. Functionally, involved in the export process of the bacteriocin pediocin PA-1/AcH. Is also essential for pediocin production. This chain is Pediocin PA-1 transport/processing ATP-binding protein PedD (pedD), found in Pediococcus acidilactici.